The primary structure comprises 379 residues: Histidinol-phosphate aminotransferase (379 aa).

At Lys236 the chain carries N6-(pyridoxal phosphate)lysine.

The protein belongs to the class-II pyridoxal-phosphate-dependent aminotransferase family. Histidinol-phosphate aminotransferase subfamily. As to quaternary structure, homodimer. Pyridoxal 5'-phosphate is required as a cofactor.

The catalysed reaction is L-histidinol phosphate + 2-oxoglutarate = 3-(imidazol-4-yl)-2-oxopropyl phosphate + L-glutamate. It participates in amino-acid biosynthesis; L-histidine biosynthesis; L-histidine from 5-phospho-alpha-D-ribose 1-diphosphate: step 7/9. The chain is Histidinol-phosphate aminotransferase from Desulfotalea psychrophila (strain LSv54 / DSM 12343).